We begin with the raw amino-acid sequence, 110 residues long: Iron-sulfur cluster assembly protein CyaY (110 aa).

The protein belongs to the frataxin family.

In terms of biological role, involved in iron-sulfur (Fe-S) cluster assembly. May act as a regulator of Fe-S biogenesis. The sequence is that of Iron-sulfur cluster assembly protein CyaY from Pseudomonas fluorescens (strain Pf0-1).